A 216-amino-acid polypeptide reads, in one-letter code: ATP synthase subunit 5, mitochondrial (216 aa).

Belongs to the ATPase delta chain family. As to quaternary structure, F-type ATPases have 2 components, CF(1) - the catalytic core - and CF(0) - the membrane proton channel. CF(1) has five subunits: alpha(3), beta(3), gamma(1), delta(1), epsilon(1). CF(0) has three main subunits: a, b and c.

It is found in the mitochondrion. The protein resides in the mitochondrion inner membrane. Mitochondrial membrane ATP synthase (F(1)F(0) ATP synthase or Complex V) produces ATP from ADP in the presence of a proton gradient across the membrane which is generated by electron transport complexes of the respiratory chain. F-type ATPases consist of two structural domains, F(1) - containing the extramembraneous catalytic core and F(0) - containing the membrane proton channel, linked together by a central stalk and a peripheral stalk. During catalysis, ATP synthesis in the catalytic domain of F(1) is coupled via a rotary mechanism of the central stalk subunits to proton translocation. Part of the complex F(0) domain and the peripheric stalk, which acts as a stator to hold the catalytic alpha(3)beta(3) subcomplex and subunit a/ATP6 static relative to the rotary elements. The polypeptide is ATP synthase subunit 5, mitochondrial (atp5) (Schizosaccharomyces pombe (strain 972 / ATCC 24843) (Fission yeast)).